The following is a 349-amino-acid chain: Succinylglutamate desuccinylase (349 aa).

3 residues coordinate Zn(2+): histidine 70, glutamate 73, and histidine 166. Residue glutamate 229 is part of the active site.

It belongs to the AspA/AstE family. Succinylglutamate desuccinylase subfamily. The cofactor is Zn(2+).

It carries out the reaction N-succinyl-L-glutamate + H2O = L-glutamate + succinate. The protein operates within amino-acid degradation; L-arginine degradation via AST pathway; L-glutamate and succinate from L-arginine: step 5/5. Functionally, transforms N(2)-succinylglutamate into succinate and glutamate. In Burkholderia pseudomallei (strain 1710b), this protein is Succinylglutamate desuccinylase.